Reading from the N-terminus, the 1706-residue chain is Serine/threonine-protein kinase vps15 (1706 aa).

Residues 24–293 form the Protein kinase domain; sequence YHNERSLGDS…YLQKYRGTVF (270 aa). ATP contacts are provided by residues 30–38 and K52; that span reads LGDSHFLRT. The stretch at 56 to 94 is one HEAT 1 repeat; it reads NKLPEISLSSIVNLLKEEQENISYRVPNAVPYIKTLVTL. The active-site Proton acceptor is the D146. HEAT repeat units lie at residues 426–465, 466–504, 511–549, 587–625, 626–664, 665–703, and 705–743; these read LYGA…NICD, ESKL…NVTS, FLFQ…QASK, HDLV…FFGK, AKSN…FIGP, RSVD…LHLF, and KLVV…SFDD. A Phosphoserine modification is found at S957. Y958 carries the phosphotyrosine modification. A disordered region spans residues 982-1099; the sequence is TTKPKDVSQS…GKSLAPLISS (118 aa). Basic and acidic residues-rich tracts occupy residues 984–1002 and 1014–1023; these read KPKD…RESN and DVYRQTDNPE. A compositionally biased stretch (polar residues) spans 1029–1055; it reads DTASSKVDTHNPTVTQPTDDTGGLNSY. The span at 1056–1069 shows a compositional bias: low complexity; that stretch reads NTENPLLTNNTLEP. Basic and acidic residues predominate over residues 1079–1090; it reads KDSDKHAKESKG. WD repeat units lie at residues 1213–1252 and 1368–1407; these read LLDG…RHIS and LQCG…LSCS. A compositionally biased stretch (polar residues) spans 1431–1442; it reads NEYTSGNNNSPV. A disordered region spans residues 1431-1461; it reads NEYTSGNNNSPVTKVPGSSSTSSSSTQPINS. The stretch at 1577–1622 is one WD 3 repeat; that stretch reads CISSPIYRYRGPSAGSVEREPLFLIAASGSPHAFIWNPHNVSASSS.

This sequence belongs to the protein kinase superfamily. Ser/Thr protein kinase family. Component of the autophagy-specific vps34 PI3-kinase complex I composed of vps15, atg6, pik3/vps34, atg14 and atg38. Also a component of the vps34 PI3-kinase complex II composed of atg6, pik3, vps15 and vps38.

It carries out the reaction L-seryl-[protein] + ATP = O-phospho-L-seryl-[protein] + ADP + H(+). The enzyme catalyses L-threonyl-[protein] + ATP = O-phospho-L-threonyl-[protein] + ADP + H(+). Functionally, functions as a part of the autophagy-specific VPS34 PI3-kinase complex I that plays a role in autophagosome assembly. This complex is essential to recruit the atg8-phosphatidylinositol conjugate and the atg12-atg5 conjugate to the pre-autophagosomal structure. Also functions as part of the VPS34 PI3-kinase complex II. The chain is Serine/threonine-protein kinase vps15 from Schizosaccharomyces pombe (strain 972 / ATCC 24843) (Fission yeast).